The primary structure comprises 105 residues: Small ribosomal subunit protein uS10c (105 aa).

It belongs to the universal ribosomal protein uS10 family. Part of the 30S ribosomal subunit.

It localises to the plastid. Its subcellular location is the chloroplast. Its function is as follows. Involved in the binding of tRNA to the ribosomes. This Pyropia yezoensis (Susabi-nori) protein is Small ribosomal subunit protein uS10c.